The sequence spans 1006 residues: Unconventional myosin-Id (1006 aa).

Position 2 is an N-acetylalanine (Ala-2). The region spanning 9–695 is the Myosin motor domain; sequence FGKADFVLMD…TLFTLEELRA (687 aa). 102–109 is an ATP binding site; it reads GESGAGKT. Ser-200 carries the phosphoserine modification. The residue at position 536 (Tyr-536) is a Phosphotyrosine. The tract at residues 572–594 is actin-binding; it reads MIALVDNLASKEPYYVRCIKPND. IQ domains are found at residues 699-719 and 721-741; these read IRIVLFLQKVWRGTLARMRYK and TKAALTIIRYYRRYKVKSYIH. The TH1 domain occupies 812-1005; that stretch reads GQRADLGLQR…RSGFILSVPG (194 aa).

It belongs to the TRAFAC class myosin-kinesin ATPase superfamily. Myosin family. In terms of assembly, interacts (via the two IQ motifs) with calmodulin. Binds an additional calmodulin chain via a third, C-terminal region. Interacts with F-actin. In terms of tissue distribution, expressed in many tissues. Highest levels in brain, followed by lung and ovary; expression is lowest in spleen.

It is found in the cytoplasm. The protein resides in the perikaryon. Its subcellular location is the cell projection. It localises to the dendrite. The protein localises to the early endosome. It is found in the cell cortex. Unconventional myosin that functions as actin-based motor protein with ATPase activity. Plays a role in endosomal protein trafficking, and especially in the transfer of cargo proteins from early to recycling endosomes. Required for normal planar cell polarity in ciliated tracheal cells, for normal rotational polarity of cilia, and for coordinated, unidirectional ciliary movement in the trachea. Required for normal, polarized cilia organization in brain ependymal epithelial cells. The polypeptide is Unconventional myosin-Id (MYO1D) (Homo sapiens (Human)).